The following is a 503-amino-acid chain: Maturase K (503 aa).

It belongs to the intron maturase 2 family. MatK subfamily.

It is found in the plastid. Its subcellular location is the chloroplast. Usually encoded in the trnK tRNA gene intron. Probably assists in splicing its own and other chloroplast group II introns. This Purshia tridentata (Antelope bitterbrush) protein is Maturase K.